The primary structure comprises 191 residues: Fe/S biogenesis protein NfuA (191 aa).

[4Fe-4S] cluster contacts are provided by cysteine 149 and cysteine 152.

This sequence belongs to the NfuA family. As to quaternary structure, homodimer. Requires [4Fe-4S] cluster as cofactor.

Its function is as follows. Involved in iron-sulfur cluster biogenesis. Binds a 4Fe-4S cluster, can transfer this cluster to apoproteins, and thereby intervenes in the maturation of Fe/S proteins. Could also act as a scaffold/chaperone for damaged Fe/S proteins. This Yersinia pseudotuberculosis serotype O:1b (strain IP 31758) protein is Fe/S biogenesis protein NfuA.